Consider the following 219-residue polypeptide: Deoxyribose-phosphate aldolase 1 (219 aa).

Catalysis depends on Asp-87, which acts as the Proton donor/acceptor. The Schiff-base intermediate with acetaldehyde role is filled by Lys-149. Lys-178 serves as the catalytic Proton donor/acceptor.

It belongs to the DeoC/FbaB aldolase family. DeoC type 1 subfamily.

The protein localises to the cytoplasm. It catalyses the reaction 2-deoxy-D-ribose 5-phosphate = D-glyceraldehyde 3-phosphate + acetaldehyde. It participates in carbohydrate degradation; 2-deoxy-D-ribose 1-phosphate degradation; D-glyceraldehyde 3-phosphate and acetaldehyde from 2-deoxy-alpha-D-ribose 1-phosphate: step 2/2. Functionally, catalyzes a reversible aldol reaction between acetaldehyde and D-glyceraldehyde 3-phosphate to generate 2-deoxy-D-ribose 5-phosphate. In Vibrio vulnificus (strain YJ016), this protein is Deoxyribose-phosphate aldolase 1.